The chain runs to 416 residues: Phosphatidylserine decarboxylase proenzyme, mitochondrial (416 aa).

Residues 1–67 (MPGKSTRPLP…GRLHFPQLAL (67 aa)) are Mitochondrial matrix-facing. The chain crosses the membrane as a helical span at residues 68–86 (RRRLGQLSCMSKPALKLRS). Over 87–416 (WPLTVLYYLL…IRFGEALGSL (330 aa)) the chain is Mitochondrial intermembrane. Active-site charge relay system; for autoendoproteolytic cleavage activity residues include aspartate 198, histidine 274, and serine 385. The Schiff-base intermediate with substrate; via pyruvic acid; for decarboxylase activity role is filled by serine 385. Serine 385 is subject to Pyruvic acid (Ser); by autocatalysis.

The protein belongs to the phosphatidylserine decarboxylase family. PSD-B subfamily. Eukaryotic type I sub-subfamily. Heterodimer of a large membrane-associated beta subunit and a small pyruvoyl-containing alpha subunit. Pyruvate is required as a cofactor. Post-translationally, is synthesized initially as an inactive proenzyme. Formation of the active enzyme involves a self-maturation process in which the active site pyruvoyl group is generated from an internal serine residue via an autocatalytic post-translational modification. Two non-identical subunits are generated from the proenzyme in this reaction, and the pyruvate is formed at the N-terminus of the alpha chain, which is derived from the carboxyl end of the proenzyme. The autoendoproteolytic cleavage occurs by a canonical serine protease mechanism, in which the side chain hydroxyl group of the serine supplies its oxygen atom to form the C-terminus of the beta chain, while the remainder of the serine residue undergoes an oxidative deamination to produce ammonia and the pyruvoyl prosthetic group on the alpha chain. During this reaction, the Ser that is part of the protease active site of the proenzyme becomes the pyruvoyl prosthetic group, which constitutes an essential element of the active site of the mature decarboxylase.

Its subcellular location is the mitochondrion inner membrane. The protein resides in the cytoplasm. It localises to the lipid droplet. It carries out the reaction a 1,2-diacyl-sn-glycero-3-phospho-L-serine + H(+) = a 1,2-diacyl-sn-glycero-3-phosphoethanolamine + CO2. Its pathway is phospholipid metabolism; phosphatidylethanolamine biosynthesis. In terms of biological role, catalyzes the formation of phosphatidylethanolamine (PtdEtn) from phosphatidylserine (PtdSer). Plays a central role in phospholipid metabolism and in the interorganelle trafficking of phosphatidylserine. May be involved in lipid droplet biogenesis at the endoplasmic reticulum membrane. This chain is Phosphatidylserine decarboxylase proenzyme, mitochondrial, found in Bos taurus (Bovine).